Here is an 89-residue protein sequence, read N- to C-terminus: Acyl-CoA-binding protein (89 aa).

The ACB domain occupies 3–88 (LKEEFEEHAE…VKQLFEAAGS (86 aa)). An acyl-CoA-binding positions include 30–34 (YGLYK), Lys56, and Tyr75.

Belongs to the ACBP family.

Functionally, binds medium- and long-chain acyl-CoA esters with very high affinity and may function as an intracellular carrier of acyl-CoA esters. This Gossypium hirsutum (Upland cotton) protein is Acyl-CoA-binding protein.